Reading from the N-terminus, the 674-residue chain is Alpha-L-arabinofuranosidase 2 (674 aa).

The N-terminal stretch at 1–24 is a signal peptide; that stretch reads MDMETSWRFLRSVCLLSFILGSFS. N-linked (GlcNAc...) asparagine glycosylation is found at Asn48, Asn180, Asn199, Asn210, Asn361, Asn522, and Asn548.

The protein belongs to the glycosyl hydrolase 51 family. High expression in flowers, siliques and stems. Observed in the vasculature of older root tissue, at the tip of anthers and in the petal blade of fully developed flowers, in floral abscission zones and in silique replum tissue. Expressed in the cambium and phloem, but not in the xylem or in the vascular system of floral tissues.

It localises to the secreted. Its subcellular location is the extracellular space. The protein localises to the extracellular matrix. It carries out the reaction Hydrolysis of terminal non-reducing alpha-L-arabinofuranoside residues in alpha-L-arabinosides.. Its function is as follows. May be involved in the coordinated dissolution of the cell wall matrix during abscission and in the secondary cell wall formation in xylem vessels. This is Alpha-L-arabinofuranosidase 2 (ASD2) from Arabidopsis thaliana (Mouse-ear cress).